We begin with the raw amino-acid sequence, 359 residues long: NADH-quinone oxidoreductase subunit H (359 aa).

A run of 8 helical transmembrane segments spans residues 16–36 (IWPA…CVLL), 94–114 (GLFV…WAVI), 129–149 (LLFL…AGWA), 167–187 (VSYE…SASL), 208–228 (FLSW…ISGL), 261–281 (FFLA…ILFL), 296–316 (IPGW…FLWV), and 331–351 (LGWK…GAWM).

It belongs to the complex I subunit 1 family. In terms of assembly, NDH-1 is composed of 14 different subunits. Subunits NuoA, H, J, K, L, M, N constitute the membrane sector of the complex.

Its subcellular location is the cell inner membrane. The enzyme catalyses a quinone + NADH + 5 H(+)(in) = a quinol + NAD(+) + 4 H(+)(out). Its function is as follows. NDH-1 shuttles electrons from NADH, via FMN and iron-sulfur (Fe-S) centers, to quinones in the respiratory chain. The immediate electron acceptor for the enzyme in this species is believed to be ubiquinone. Couples the redox reaction to proton translocation (for every two electrons transferred, four hydrogen ions are translocated across the cytoplasmic membrane), and thus conserves the redox energy in a proton gradient. This subunit may bind ubiquinone. This Polaromonas sp. (strain JS666 / ATCC BAA-500) protein is NADH-quinone oxidoreductase subunit H.